Here is a 294-residue protein sequence, read N- to C-terminus: Bifunctional protein FolD (294 aa).

NADP(+) is bound by residues 166–168 (GRS), serine 191, and isoleucine 232.

It belongs to the tetrahydrofolate dehydrogenase/cyclohydrolase family. Homodimer.

The enzyme catalyses (6R)-5,10-methylene-5,6,7,8-tetrahydrofolate + NADP(+) = (6R)-5,10-methenyltetrahydrofolate + NADPH. It catalyses the reaction (6R)-5,10-methenyltetrahydrofolate + H2O = (6R)-10-formyltetrahydrofolate + H(+). It functions in the pathway one-carbon metabolism; tetrahydrofolate interconversion. Its function is as follows. Catalyzes the oxidation of 5,10-methylenetetrahydrofolate to 5,10-methenyltetrahydrofolate and then the hydrolysis of 5,10-methenyltetrahydrofolate to 10-formyltetrahydrofolate. The protein is Bifunctional protein FolD of Bradyrhizobium diazoefficiens (strain JCM 10833 / BCRC 13528 / IAM 13628 / NBRC 14792 / USDA 110).